The following is a 101-amino-acid chain: Ubiquitin-related modifier 1 (101 aa).

Glycine 101 is subject to 1-thioglycine. Glycine 101 participates in a covalent cross-link: Glycyl lysine isopeptide (Gly-Lys) (interchain with K-? in acceptor proteins).

This sequence belongs to the URM1 family. In terms of processing, C-terminal thiocarboxylation occurs in 2 steps, it is first acyl-adenylated (-COAMP) via the hesA/moeB/thiF part of UBA4, then thiocarboxylated (-COSH) via the rhodanese domain of UBA4.

It localises to the cytoplasm. It participates in tRNA modification; 5-methoxycarbonylmethyl-2-thiouridine-tRNA biosynthesis. In terms of biological role, acts as a sulfur carrier required for 2-thiolation of mcm(5)S(2)U at tRNA wobble positions of cytosolic tRNA(Lys), tRNA(Glu) and tRNA(Gln). Serves as sulfur donor in tRNA 2-thiolation reaction by being thiocarboxylated (-COSH) at its C-terminus by the MOCS3 homolog UBA4. The sulfur is then transferred to tRNA to form 2-thiolation of mcm(5)S(2)U. Prior mcm(5) tRNA modification by the elongator complex is required for 2-thiolation. Also acts as a ubiquitin-like protein (UBL) that is covalently conjugated via an isopeptide bond to lysine residues of target proteins such as AHP1. The thiocarboxylated form serves as substrate for conjugation and oxidative stress specifically induces the formation of UBL-protein conjugates. This chain is Ubiquitin-related modifier 1, found in Debaryomyces hansenii (strain ATCC 36239 / CBS 767 / BCRC 21394 / JCM 1990 / NBRC 0083 / IGC 2968) (Yeast).